The sequence spans 514 residues: Major facilitator superfamily domain-containing protein 4A (514 aa).

Helical transmembrane passes span 19 to 39 (LTYW…GPTL), 53 to 73 (ISWV…LGGV), 82 to 102 (LWAL…IPFC), 107 to 127 (VLAS…TVAN), and 139 to 159 (AVFL…SPLI). N-linked (GlcNAc...) asparagine glycosylation occurs at N177. 7 helical membrane-spanning segments follow: residues 221-241 (YAFW…LMLL), 307-327 (FFAI…LTGA), 347-367 (VAGY…LLSI), 376-396 (ATMV…LLIF), 400-420 (VVFL…TFPS), 438-458 (VLVT…GSIF), and 466-486 (FLVC…LLLF).

Belongs to the major facilitator superfamily.

The protein localises to the membrane. The chain is Major facilitator superfamily domain-containing protein 4A from Homo sapiens (Human).